Consider the following 108-residue polypeptide: UPF0145 protein LCABL_07110 (108 aa).

It belongs to the UPF0145 family.

In Lacticaseibacillus casei (strain BL23) (Lactobacillus casei), this protein is UPF0145 protein LCABL_07110.